Here is a 366-residue protein sequence, read N- to C-terminus: Holliday junction branch migration complex subunit RuvB (366 aa).

A disordered region spans residues 1–48 (MIDRLMAREAIYQQSNPDPGGDPPEDGPPHGKNAADGGDEPDRGPDPD). Positions 21–212 (GDPPEDGPPH…FQIREHLGWY (192 aa)) are large ATPase domain (RuvB-L). Residues Leu-51, Arg-52, Gly-93, Lys-96, Thr-97, Thr-98, 159-161 (EDF), Arg-202, Tyr-212, and Arg-249 each bind ATP. A Mg(2+)-binding site is contributed by Thr-97. The interval 213–283 (TRKELAEIVL…VCEAALDMIG (71 aa)) is small ATPAse domain (RuvB-S). Residues 286-366 (HLGLDKQDRN…KRQMPDRPLS (81 aa)) form a head domain (RuvB-H) region. 3 residues coordinate DNA: Arg-341, Arg-343, and Arg-346.

The protein belongs to the RuvB family. As to quaternary structure, homohexamer. Forms an RuvA(8)-RuvB(12)-Holliday junction (HJ) complex. HJ DNA is sandwiched between 2 RuvA tetramers; dsDNA enters through RuvA and exits via RuvB. An RuvB hexamer assembles on each DNA strand where it exits the tetramer. Each RuvB hexamer is contacted by two RuvA subunits (via domain III) on 2 adjacent RuvB subunits; this complex drives branch migration. In the full resolvosome a probable DNA-RuvA(4)-RuvB(12)-RuvC(2) complex forms which resolves the HJ.

It localises to the cytoplasm. It catalyses the reaction ATP + H2O = ADP + phosphate + H(+). In terms of biological role, the RuvA-RuvB-RuvC complex processes Holliday junction (HJ) DNA during genetic recombination and DNA repair, while the RuvA-RuvB complex plays an important role in the rescue of blocked DNA replication forks via replication fork reversal (RFR). RuvA specifically binds to HJ cruciform DNA, conferring on it an open structure. The RuvB hexamer acts as an ATP-dependent pump, pulling dsDNA into and through the RuvAB complex. RuvB forms 2 homohexamers on either side of HJ DNA bound by 1 or 2 RuvA tetramers; 4 subunits per hexamer contact DNA at a time. Coordinated motions by a converter formed by DNA-disengaged RuvB subunits stimulates ATP hydrolysis and nucleotide exchange. Immobilization of the converter enables RuvB to convert the ATP-contained energy into a lever motion, pulling 2 nucleotides of DNA out of the RuvA tetramer per ATP hydrolyzed, thus driving DNA branch migration. The RuvB motors rotate together with the DNA substrate, which together with the progressing nucleotide cycle form the mechanistic basis for DNA recombination by continuous HJ branch migration. Branch migration allows RuvC to scan DNA until it finds its consensus sequence, where it cleaves and resolves cruciform DNA. In Rhodopirellula baltica (strain DSM 10527 / NCIMB 13988 / SH1), this protein is Holliday junction branch migration complex subunit RuvB.